The primary structure comprises 712 residues: Polyribonucleotide nucleotidyltransferase (712 aa).

Residues Asp-485 and Asp-491 each contribute to the Mg(2+) site. Positions 552-611 constitute a KH domain; it reads PKITTISVPKEKIRDVIGQGGKVIREIVEYSGAKIDINDDGTIMIAASSEDQATRAIERI. The S1 motif domain occupies 621 to 689; that stretch reads GAIYTGKVVK…DRGKVKLSMR (69 aa).

Belongs to the polyribonucleotide nucleotidyltransferase family. Mg(2+) serves as cofactor.

The protein resides in the cytoplasm. It carries out the reaction RNA(n+1) + phosphate = RNA(n) + a ribonucleoside 5'-diphosphate. Functionally, involved in mRNA degradation. Catalyzes the phosphorolysis of single-stranded polyribonucleotides processively in the 3'- to 5'-direction. This chain is Polyribonucleotide nucleotidyltransferase, found in Gluconacetobacter diazotrophicus (strain ATCC 49037 / DSM 5601 / CCUG 37298 / CIP 103539 / LMG 7603 / PAl5).